Reading from the N-terminus, the 36-residue chain is Lambda-hexatoxin-Hv1a (36 aa).

4 disulfide bridges follow: Cys3–Cys17, Cys10–Cys22, Cys13–Cys14, and Cys16–Cys33.

The protein belongs to the neurotoxin 11 (kappa toxin) family. As to expression, expressed by the venom gland.

It localises to the secreted. This excitatory toxin inhibits insect calcium-activated potassium (KCa) channels (Slo-type). This chain is Lambda-hexatoxin-Hv1a, found in Hadronyche versuta (Blue mountains funnel-web spider).